A 447-amino-acid chain; its full sequence is MPSQRSSLMQPIPEETRKTPSAAAEDTRWSRPECQAWTGILLLGTCLLYCARVTMPVCTVAMSQDFGWNKKEAGIVLSSFFWGYCLTQVVGGHLGDRIGGEKVILLSASAWGFITVTTPLLAHLGSGHLAFLTFSRILTGLLQGVYFPALTSLLSQKVQESERAFTYSTVGAGSQVGTLVTGGVGSVLLDQCGWQSVFYFSGGLTLLWAYYVYRYLLNEKDLVLALGFLAQGLPVTKPSKVPWRQLFRKASVWAAICSQLCSACSFFILLSWLPTFFKETFPNSKGWVFNVVPWMLAIPASLFSGFISDRLISQGYRVITVRKFMQVMGLGLSSIFALCLGHTTSFLKAMIFASASIGFQTFNHSGISVNIQDLAPSCAGFLFGVANTAGALAGVVGVCLSGYLIETTGSWTCVFHLVAIISNLGLGTFLVFGKAQRVDLVPTHEDL.

Positions 1–26 (MPSQRSSLMQPIPEETRKTPSAAAED) are disordered. A run of 11 helical transmembrane segments spans residues 40–60 (ILLL…VCTV), 74–94 (GIVL…GGHL), 103–123 (VILL…LLAH), 129–149 (LAFL…YFPA), 169–189 (TVGA…SVLL), 192–212 (CGWQ…AYYV), 252–272 (VWAA…LLSW), 287–307 (WVFN…SGFI), 327–347 (VMGL…TSFL), 380–400 (GFLF…GVCL), and 413–433 (CVFH…LVFG).

Belongs to the major facilitator superfamily. Sodium/anion cotransporter family. In brain, specifically expressed in the medulla and is associated with chromaffin granules (at protein level). Predominantly expressed in adrenal gland, brain and thyroid.

The protein resides in the cytoplasmic vesicle. Its subcellular location is the secretory vesicle. It is found in the chromaffin granule membrane. The protein localises to the secretory vesicle membrane. It localises to the lysosome membrane. It catalyses the reaction ATP(in) = ATP(out). The enzyme catalyses ADP(in) = ADP(out). It carries out the reaction GTP(in) = GTP(out). Activity is chloride-dependent. Functionally, voltage-gated ATP nucleotide uniporter that can also transport the purine nucleotides ADP and GTP. Uses the membrane potential as the driving force to control ATP accumulation in lysosomes and secretory vesicles. By controlling ATP storage in lysosomes, regulates ATP-dependent proteins of these organelles. Also indirectly regulates the exocytosis of ATP through its import into lysosomes in astrocytes and secretory vesicles such as adrenal chromaffin granules, mucin granules and synaptic vesicles. This chain is Voltage-gated purine nucleotide uniporter SLC17A9, found in Mus musculus (Mouse).